A 601-amino-acid polypeptide reads, in one-letter code: MSNQVPLKRLFKVILVIRCVQALLTRTFFQADEFWQSLEPAHYMAFGYGELTWEWSFGLRSYAFPLIFQIGYTLVKYAAISCELIVQTATDWVLLFVANVIPNSEFGWEMVQEMRSFPEEIRGFIEYQGVIYAPKLIMAVLAAIGEFHVILLAEKLYKLTMDKSDDSKGSDKKHSTVINFTLVATVSNFFNCFFITRSFINSFEMILTSVSLYYWDWTSGEHIESFDFLKSLIIGTFTVLQRPTNAFIWLILGGYMILNLVLSKRWRKLFSLLIKVICASFISISTNLCIDYYFYGYITIPVLKFIKFNCTSSLSKFYGVAPWNFHVFQSLPIVAGYSLPLLIHSFFCSLTKKRFLSPLVNPFLQIKTVVLLNVILYSLIPHKEFRFIYPLQPFFIILSVFDGIWLLQKYGSTATTRTMEFFSQVMWILPVVSMVASMLLSTLHESGTVAVMDYLHSIRNIDSIGFIMPCHSTPWQSHFHRNDVKELWAITCSPPLHLLTDPDANAKLPFYMDESDYLYDNISKFMYQHFPPVFRKSLRSPGKQYTYEWPEYLVIFEDLDSQFMNDYLVDSMYIEETRFFNSLVHWDKRRSGDIIIYHKMP.

5 helical membrane-spanning segments follow: residues 66-86 (LIFQIGYTLVKYAAISCELIV), 133-153 (APKLIMAVLAAIGEFHVILLA), 176-196 (TVINFTLVATVSNFFNCFFIT), 243-263 (PTNAFIWLILGGYMILNLVLS), and 270-290 (FSLLIKVICASFISISTNLCI). An N-linked (GlcNAc...) asparagine glycan is attached at Asn-309. Helical transmembrane passes span 327–347 (VFQSLPIVAGYSLPLLIHSFF), 360–380 (VNPFLQIKTVVLLNVILYSLI), 387–407 (FIYPLQPFFIILSVFDGIWLL), and 421–441 (FFSQVMWILPVVSMVASMLLS). A glycan (N-linked (GlcNAc...) asparagine) is linked at Asn-521.

It belongs to the glycosyltransferase 22 family. PIGB subfamily.

It localises to the endoplasmic reticulum membrane. Its pathway is glycolipid biosynthesis; glycosylphosphatidylinositol-anchor biosynthesis. In terms of biological role, mannosyltransferase involved in glycosylphosphatidylinositol-anchor biosynthesis. Transfers the third mannose to Man2-GlcN-acyl-PI during GPI precursor assembly. This chain is GPI mannosyltransferase 3 (GPI10), found in Kluyveromyces lactis (strain ATCC 8585 / CBS 2359 / DSM 70799 / NBRC 1267 / NRRL Y-1140 / WM37) (Yeast).